A 636-amino-acid polypeptide reads, in one-letter code: Protein cueball (636 aa).

The signal sequence occupies residues 1–27; that stretch reads MKLCTSQQFGVAVLFIVLNICSPLADA. The Extracellular portion of the chain corresponds to 28 to 517; that stretch reads SPIAWDFAVT…ADGPSSLRSG (490 aa). N-linked (GlcNAc...) asparagine glycosylation is found at N83 and N109. 3 LDL-receptor class B repeats span residues 122 to 169, 170 to 214, and 215 to 260; these read RNLF…DICR, RQLY…DQLS, and DRIF…TEDT. Residue N190 is glycosylated (N-linked (GlcNAc...) asparagine). N-linked (GlcNAc...) asparagine glycans are attached at residues N285 and N339. EGF-like domains follow at residues 350-384 and 419-456; these read RMDA…ARCE and EYYK…TRCE. Disulfide bonds link C359–C372, C374–C383, C423–C433, C427–C444, and C446–C455. Residues N449, N458, and N493 are each glycosylated (N-linked (GlcNAc...) asparagine). Residues 518 to 538 traverse the membrane as a helical segment; that stretch reads SVIIVLVVGIVSSLALVAVIV. Residues 539–636 are Cytoplasmic-facing; it reads HGLRLIYKPK…IHNMEDDLLT (98 aa).

The protein belongs to the cueball family.

Its subcellular location is the cell membrane. In terms of biological role, has a role in spermatogenesis and oogenesis. The protein is Protein cueball of Drosophila virilis (Fruit fly).